We begin with the raw amino-acid sequence, 1637 residues long: Stress response protein NST1 (1637 aa).

Positions Met-1 to Lys-17 are enriched in polar residues. Disordered stretches follow at residues Met-1–Asn-155, His-221–His-252, Leu-442–Leu-494, Lys-504–His-523, Lys-681–Asp-734, Gln-746–Lys-825, Ala-871–Val-1036, Ser-1049–Pro-1075, Asn-1176–Ile-1299, and Tyr-1512–Leu-1534. Over residues Val-24–Asn-33 the composition is skewed to basic and acidic residues. 2 stretches are compositionally biased toward low complexity: residues Asn-34 to Thr-53 and Asn-64 to Ser-113. Residues Ala-124–Lys-134 show a composition bias toward basic residues. Low complexity predominate over residues Ser-135 to Asn-155. Residues Gln-446 to Gln-470 are compositionally biased toward low complexity. Over residues Val-471–Lys-487 the composition is skewed to polar residues. Polar residues predominate over residues Pro-692 to Asn-706. A compositionally biased stretch (basic and acidic residues) spans Asp-717–Asp-734. A compositionally biased stretch (acidic residues) spans Glu-754 to Phe-808. A coiled-coil region spans residues Lys-855–Ser-1023. 2 stretches are compositionally biased toward basic and acidic residues: residues Ala-871–Lys-887 and Ala-896–Ala-1021. The span at Ser-1049–Pro-1063 shows a compositional bias: polar residues. Over residues Asn-1176–Ser-1199 the composition is skewed to low complexity. Polar residues predominate over residues Gly-1201–Phe-1228. The segment covering Pro-1234–Gln-1257 has biased composition (low complexity). The segment covering Asn-1258–Ser-1267 has biased composition (polar residues). Low complexity-rich tracts occupy residues Thr-1282 to Ile-1299 and Gln-1514 to Leu-1534.

The protein belongs to the NST1 family.

The protein localises to the cytoplasm. Its function is as follows. May act as a negative regulator of salt tolerance. The chain is Stress response protein NST1 (NST1) from Lodderomyces elongisporus (strain ATCC 11503 / CBS 2605 / JCM 1781 / NBRC 1676 / NRRL YB-4239) (Yeast).